Reading from the N-terminus, the 268-residue chain is Mediator of RNA polymerase II transcription subunit 8-A (268 aa).

2 coiled-coil regions span residues 1–26 (MQRE…KNSL) and 117–160 (VEEL…EERE). The interval 190 to 268 (GLSNRRPPGQ…KSASMHPYQR (79 aa)) is disordered. A compositionally biased stretch (polar residues) spans 223–246 (VPMSLQSNQQQQHMAGVSMSQGNQ).

It belongs to the Mediator complex subunit 8 family. In terms of assembly, component of the Mediator complex. May be part of a multisubunit E3 ubiquitin-protein ligase complex.

The protein localises to the nucleus. It participates in protein modification; protein ubiquitination. Component of the Mediator complex, a coactivator involved in the regulated transcription of nearly all RNA polymerase II-dependent genes. Mediator functions as a bridge to convey information from gene-specific regulatory proteins to the basal RNA polymerase II transcription machinery. Mediator is recruited to promoters by direct interactions with regulatory proteins and serves as a scaffold for the assembly of a functional preinitiation complex with RNA polymerase II and the general transcription factors. May play a role as a target recruitment subunit in E3 ubiquitin-protein ligase complexes and thus in ubiquitination and subsequent proteasomal degradation of target proteins. The chain is Mediator of RNA polymerase II transcription subunit 8-A (med8-a) from Xenopus laevis (African clawed frog).